We begin with the raw amino-acid sequence, 92 residues long: Large ribosomal subunit protein bL28 (92 aa).

The protein belongs to the bacterial ribosomal protein bL28 family.

In Borreliella afzelii (strain PKo) (Borrelia afzelii), this protein is Large ribosomal subunit protein bL28.